A 311-amino-acid polypeptide reads, in one-letter code: tRNA-cytidine(32) 2-sulfurtransferase (311 aa).

The PP-loop motif motif lies at 47–52 (SGGKDS). [4Fe-4S] cluster-binding residues include C122, C125, and C213.

Belongs to the TtcA family. In terms of assembly, homodimer. It depends on Mg(2+) as a cofactor. [4Fe-4S] cluster is required as a cofactor.

Its subcellular location is the cytoplasm. The enzyme catalyses cytidine(32) in tRNA + S-sulfanyl-L-cysteinyl-[cysteine desulfurase] + AH2 + ATP = 2-thiocytidine(32) in tRNA + L-cysteinyl-[cysteine desulfurase] + A + AMP + diphosphate + H(+). The protein operates within tRNA modification. In terms of biological role, catalyzes the ATP-dependent 2-thiolation of cytidine in position 32 of tRNA, to form 2-thiocytidine (s(2)C32). The sulfur atoms are provided by the cysteine/cysteine desulfurase (IscS) system. The protein is tRNA-cytidine(32) 2-sulfurtransferase of Escherichia fergusonii (strain ATCC 35469 / DSM 13698 / CCUG 18766 / IAM 14443 / JCM 21226 / LMG 7866 / NBRC 102419 / NCTC 12128 / CDC 0568-73).